We begin with the raw amino-acid sequence, 334 residues long: Holliday junction branch migration complex subunit RuvB (334 aa).

The segment at 4 to 184 is large ATPase domain (RuvB-L); sequence ADRLIQPQLQ…FGIPLRLEFY (181 aa). ATP-binding positions include arginine 24, glycine 65, lysine 68, threonine 69, threonine 70, 131–133, arginine 174, tyrosine 184, and arginine 221; that span reads EDY. Position 69 (threonine 69) interacts with Mg(2+). Positions 185–255 are small ATPAse domain (RuvB-S); it reads NVKDLSTIVT…VAELALNLLD (71 aa). The interval 258–334 is head domain (RuvB-H); the sequence is GEGFDYMDRK…YVHFGMIKPE (77 aa). The DNA site is built by arginine 294, arginine 313, and arginine 318.

Belongs to the RuvB family. In terms of assembly, homohexamer. Forms an RuvA(8)-RuvB(12)-Holliday junction (HJ) complex. HJ DNA is sandwiched between 2 RuvA tetramers; dsDNA enters through RuvA and exits via RuvB. An RuvB hexamer assembles on each DNA strand where it exits the tetramer. Each RuvB hexamer is contacted by two RuvA subunits (via domain III) on 2 adjacent RuvB subunits; this complex drives branch migration. In the full resolvosome a probable DNA-RuvA(4)-RuvB(12)-RuvC(2) complex forms which resolves the HJ.

The protein localises to the cytoplasm. The enzyme catalyses ATP + H2O = ADP + phosphate + H(+). In terms of biological role, the RuvA-RuvB-RuvC complex processes Holliday junction (HJ) DNA during genetic recombination and DNA repair, while the RuvA-RuvB complex plays an important role in the rescue of blocked DNA replication forks via replication fork reversal (RFR). RuvA specifically binds to HJ cruciform DNA, conferring on it an open structure. The RuvB hexamer acts as an ATP-dependent pump, pulling dsDNA into and through the RuvAB complex. RuvB forms 2 homohexamers on either side of HJ DNA bound by 1 or 2 RuvA tetramers; 4 subunits per hexamer contact DNA at a time. Coordinated motions by a converter formed by DNA-disengaged RuvB subunits stimulates ATP hydrolysis and nucleotide exchange. Immobilization of the converter enables RuvB to convert the ATP-contained energy into a lever motion, pulling 2 nucleotides of DNA out of the RuvA tetramer per ATP hydrolyzed, thus driving DNA branch migration. The RuvB motors rotate together with the DNA substrate, which together with the progressing nucleotide cycle form the mechanistic basis for DNA recombination by continuous HJ branch migration. Branch migration allows RuvC to scan DNA until it finds its consensus sequence, where it cleaves and resolves cruciform DNA. This Shewanella oneidensis (strain ATCC 700550 / JCM 31522 / CIP 106686 / LMG 19005 / NCIMB 14063 / MR-1) protein is Holliday junction branch migration complex subunit RuvB.